The chain runs to 273 residues: MVLYIIGLGLGDEKDVTIKGFEAIKKSSKIYLEAYTSLLGGSTSIEALEKFYEKKIIIADREMVESGCEEMLKESTENDVSFLVVGDPFGATTHTDLVIRAKELSIPVKVIHNASIMNAIGCCGLQLYSYGQTISMVFFTETTKPDSWYDRVKINRVNGMHTLCLLDIKVKEQSIENMCRGRLIYEPPRFMTVNQCIEQLLEIEEIRKEKVYDQDTLCIGLSRVGQDDQQIISGTMKELLDVDFGAPLHSFIICGDMHFIEKEYFETFRVKKN.

S-adenosyl-L-methionine-binding positions include Leu10, Asp87, Gly90, 115 to 116, Leu166, Val224, and His249; that span reads SI.

This sequence belongs to the diphthine synthase family.

The catalysed reaction is 2-[(3S)-amino-3-carboxypropyl]-L-histidyl-[translation elongation factor 2] + 4 S-adenosyl-L-methionine = diphthine methyl ester-[translation elongation factor 2] + 4 S-adenosyl-L-homocysteine + 3 H(+). It functions in the pathway protein modification; peptidyl-diphthamide biosynthesis. Functionally, S-adenosyl-L-methionine-dependent methyltransferase that catalyzes four methylations of the modified target histidine residue in translation elongation factor 2 (EF-2), to form an intermediate called diphthine methyl ester. The four successive methylation reactions represent the second step of diphthamide biosynthesis. The sequence is that of Diphthine methyl ester synthase (dph5) from Dictyostelium discoideum (Social amoeba).